The following is a 347-amino-acid chain: CD5 antigen-like (347 aa).

The signal sequence occupies residues 1 to 19; it reads MALLFSLILAICTRPGFLA. 3 consecutive SRCR domains span residues 24–125, 138–239, and 244–346; these read VRLV…ASCE, VRLA…VECE, and LRLV…VICS. 11 disulfides stabilise this stretch: C33/C67, C49/C114, C62/C124, C96/C106, C163/C228, C176/C238, C208/C218, C253/C287, C269/C335, C282/C345, and C315/C325.

As to quaternary structure, interacts with FASN; the interaction is direct. Interacts (via SRCR2 and SRCR3) with pentameric IgM (via Fc region); disulfide-linked. In terms of processing, not N-glycosylated. Probably not O-glycosylated. In terms of tissue distribution, expressed in spleen, lymph node, thymus, bone marrow, and fetal liver, but not in non-lymphoid tissues.

Its subcellular location is the secreted. The protein localises to the cytoplasm. Functionally, secreted protein that acts as a key regulator of lipid synthesis: mainly expressed by macrophages in lymphoid and inflamed tissues and regulates mechanisms in inflammatory responses, such as infection or atherosclerosis. Able to inhibit lipid droplet size in adipocytes. Following incorporation into mature adipocytes via CD36-mediated endocytosis, associates with cytosolic FASN, inhibiting fatty acid synthase activity and leading to lipolysis, the degradation of triacylglycerols into glycerol and free fatty acids (FFA). CD5L-induced lipolysis occurs with progression of obesity: participates in obesity-associated inflammation following recruitment of inflammatory macrophages into adipose tissues, a cause of insulin resistance and obesity-related metabolic disease. Regulation of intracellular lipids mediated by CD5L has a direct effect on transcription regulation mediated by nuclear receptors ROR-gamma (RORC). Acts as a key regulator of metabolic switch in T-helper Th17 cells. Regulates the expression of pro-inflammatory genes in Th17 cells by altering the lipid content and limiting synthesis of cholesterol ligand of RORC, the master transcription factor of Th17-cell differentiation. CD5L is mainly present in non-pathogenic Th17 cells, where it decreases the content of polyunsaturated fatty acyls (PUFA), affecting two metabolic proteins MSMO1 and CYP51A1, which synthesize ligands of RORC, limiting RORC activity and expression of pro-inflammatory genes. Participates in obesity-associated autoimmunity via its association with IgM, interfering with the binding of IgM to Fcalpha/mu receptor and enhancing the development of long-lived plasma cells that produce high-affinity IgG autoantibodies. Also acts as an inhibitor of apoptosis in macrophages: promotes macrophage survival from the apoptotic effects of oxidized lipids in case of atherosclerosis. Involved in early response to microbial infection against various pathogens by acting as a pattern recognition receptor and by promoting autophagy. The protein is CD5 antigen-like (CD5L) of Homo sapiens (Human).